Here is a 438-residue protein sequence, read N- to C-terminus: 23S rRNA (uracil(1939)-C(5))-methyltransferase RlmD (438 aa).

The TRAM domain occupies 10-68; sequence RVTTRQTITVKVHDLDSFGQGVAHHNGKALFVQGALPDEVAEVSIIEDKRHFSRGVATR. 4 residues coordinate [4Fe-4S] cluster: Cys81, Cys87, Cys90, and Cys168. S-adenosyl-L-methionine is bound by residues Gln271, Phe300, Asn305, Glu321, Asn348, and Asp369. Catalysis depends on Cys395, which acts as the Nucleophile.

This sequence belongs to the class I-like SAM-binding methyltransferase superfamily. RNA M5U methyltransferase family. RlmD subfamily.

The enzyme catalyses uridine(1939) in 23S rRNA + S-adenosyl-L-methionine = 5-methyluridine(1939) in 23S rRNA + S-adenosyl-L-homocysteine + H(+). In terms of biological role, catalyzes the formation of 5-methyl-uridine at position 1939 (m5U1939) in 23S rRNA. The protein is 23S rRNA (uracil(1939)-C(5))-methyltransferase RlmD of Erwinia tasmaniensis (strain DSM 17950 / CFBP 7177 / CIP 109463 / NCPPB 4357 / Et1/99).